Reading from the N-terminus, the 225-residue chain is Rho GDP-dissociation inhibitor 3 (225 aa).

Belongs to the Rho GDI family.

It localises to the cytoplasm. Inhibits GDP/GTP exchange reaction of RhoB. Interacts specifically with the GDP- and GTP-bound forms of post-translationally processed Rhob and Rhog proteins, both of which show a growth-regulated expression in mammalian cells. Stimulates the release of the GDP-bound but not the GTP-bound RhoB protein. Also inhibits the GDP/GTP exchange of RhoB but shows less ability to inhibit the dissociation of prebound GTP. The sequence is that of Rho GDP-dissociation inhibitor 3 (ARHGDIG) from Bos taurus (Bovine).